The chain runs to 151 residues: Sigma factor binding protein 1, chloroplastic (151 aa).

The segment covering 1-13 (MESSSSTFLTTTS) has biased composition (low complexity). Disordered regions lie at residues 1–41 (MESS…KPIK) and 66–93 (TGQD…PPAE). The transit peptide at 1-54 (MESSSSTFLTTTSLDKKKPSPVSRKSPKQKKKTTSTNKPIKVRYISNPMRVQTC) directs the protein to the chloroplast. Residues 16–32 (KKKPSPVSRKSPKQKKK) carry the Bipartite nuclear localization signal motif. Residues 58–67 (FRELVQELTG) carry the VQ motif.

As to quaternary structure, interacts with the sigma factor SIGA in chloroplast. Interacts with WRKY25 and WRKY33 in the nucleus. As to expression, expressed in leaves and roots, but not in flowers.

Its subcellular location is the plastid. It localises to the chloroplast. The protein resides in the nucleus. Functionally, contributes to plant defense. May regulate chloroplast metabolism upon infection with pathogens such as Pseudomonas syringae. Functions as activator of WRKY33 in plant defense against necrotrophic pathogens by stimulating the DNA-binding activity of WRKY33. This is Sigma factor binding protein 1, chloroplastic (SIB1) from Arabidopsis thaliana (Mouse-ear cress).